Consider the following 672-residue polypeptide: Nuclear RNA export factor 1 (672 aa).

Disordered regions lie at residues 1–52 and 73–101; these read MPKR…SFKP and DEDDDMSDMTTAVKDRPTSRRRGSPIPRG. A compositionally biased stretch (basic residues) spans 40 to 49; sequence RKDRNKRRVS. Residues 113–193 enclose the RRM domain; it reads WYQVTLQNAQ…PRVRSGIPLV (81 aa). LRR repeat units follow at residues 255–280, 281–304, 305–332, and 333–360; these read DLEALNLNDNSISSMEAFKGVEKRLP, NLKILYLGDNKIPSLAHLVVLRNL, SILELVLKNNPCRSRYKDSQQFISEVRR, and KFPKLVKLDGETLEPQITFDLSEQGRLL. Residues 375 to 529 form the NTF2 domain; sequence VVRQFLDQYF…FCIRNETIFI (155 aa). Residues 541–564 form a disordered region; that stretch reads KRSQHQPAPGAMPSTSSAVTSPQA. The span at 553–563 shows a compositional bias: polar residues; the sequence is PSTSSAVTSPQ. Phosphoserine is present on Ser561. The region spanning 618–672 is the TAP-C domain; that stretch reads STKMQMIEAMSAQSQMNVIWSRKCLEETNWDFNHAAFVFEKLFKENKIPPEAFMK.

Belongs to the NXF family. Interacts with Nxt1. Interacts with ZC3H3. Forms a complex with Nup358/RanBP2, RanGAP and Nxt1. Interacts with Nup54 and Nup58. Interacts with Orc3 and Hpr1. Expressed ubiquitously.

It is found in the nucleus. It localises to the nucleoplasm. The protein localises to the cytoplasm. The protein resides in the nucleus envelope. Mediates the export of the majority of mRNAs from the nucleus to the cytoplasm. In ovarian follicle cells, plays a role in transposable element silencing regulation by enabling the nuclear export of flamenco (flam) transcripts and subsequent piRNA biogenesis. The sequence is that of Nuclear RNA export factor 1 from Drosophila melanogaster (Fruit fly).